We begin with the raw amino-acid sequence, 472 residues long: MVKLTMEPVTRIEGHAKITVHLDDAGNVEDTRLHVMEFRGFEKFLQGRPIEEAPRIVPRICGICDVQHHLAAAKAVDACFGFEPDDVLPAAYKMREIMNWGSYMHSHGLHFYFLAAPDFIAGKDRKTRNVFQIIKDAPDVALQAIELRKNALEIVRATGGRPIHPTSSTPGGISTELDDETQKDLLQKAQRNVELAEATLELAVPIFEENIDLVNSLGNIETYHTGLVKNGVWDVYDGIVRIKDKEGNLFREFKPADYADTIAEHVKPYSWLKFPYIKDLGYPDGVYRVSPLSRLNVADKMPDAAPKAQDYFKEFQDKFGYAQQTLLYHWARLIEVLACAECAADALEGDLSGEKFPDSLERQAGDGVGIVEAPRGTLTHHYTCDENGLITKANIVVATIQNNPAMEMGIQKVAQDYIKPGVEVDDKIFNLMEMVIRAYDPCLSCATHTIDSQMRLATLEVYDSEGDLVKRI.

Residues C61, C64, C442, and C445 each coordinate Ni(2+).

It belongs to the [NiFe]/[NiFeSe] hydrogenase large subunit family. In terms of assembly, the F420-non-reducing hydrogenase is composed of three subunits; MvhA, MvhD and MvhG. It forms a complex with the heterodisulfide reductase (hdr). It depends on Ni(2+) as a cofactor.

Part of a complex that provides reducing equivalents for heterodisulfide reductase. The chain is F420-non-reducing hydrogenase subunit A (mvhA) from Methanothermobacter marburgensis (strain ATCC BAA-927 / DSM 2133 / JCM 14651 / NBRC 100331 / OCM 82 / Marburg) (Methanobacterium thermoautotrophicum).